Here is a 98-residue protein sequence, read N- to C-terminus: Small ribosomal subunit protein bS18 (98 aa).

This sequence belongs to the bacterial ribosomal protein bS18 family. As to quaternary structure, part of the 30S ribosomal subunit. Forms a tight heterodimer with protein bS6.

Functionally, binds as a heterodimer with protein bS6 to the central domain of the 16S rRNA, where it helps stabilize the platform of the 30S subunit. This is Small ribosomal subunit protein bS18 from Flavobacterium psychrophilum (strain ATCC 49511 / DSM 21280 / CIP 103535 / JIP02/86).